A 471-amino-acid polypeptide reads, in one-letter code: Sulfate adenylyltransferase subunit 1 (471 aa).

Residues 24–240 enclose the tr-type G domain; it reads KSLLRFLTCG…ESADVERELE (217 aa). The tract at residues 33–40 is G1; that stretch reads GSVDDGKS. 33–40 serves as a coordination point for GTP; sequence GSVDDGKS. Residues 91-95 form a G2 region; the sequence is GITID. The segment at 112 to 115 is G3; sequence DTPG. GTP is bound by residues 112 to 116 and 167 to 170; these read DTPGH and NKMD. Positions 167–170 are G4; sequence NKMD. The G5 stretch occupies residues 204–206; it reads SAL.

This sequence belongs to the TRAFAC class translation factor GTPase superfamily. Classic translation factor GTPase family. CysN/NodQ subfamily. In terms of assembly, heterodimer composed of CysD, the smaller subunit, and CysN.

It carries out the reaction sulfate + ATP + H(+) = adenosine 5'-phosphosulfate + diphosphate. It functions in the pathway sulfur metabolism; hydrogen sulfide biosynthesis; sulfite from sulfate: step 1/3. With CysD forms the ATP sulfurylase (ATPS) that catalyzes the adenylation of sulfate producing adenosine 5'-phosphosulfate (APS) and diphosphate, the first enzymatic step in sulfur assimilation pathway. APS synthesis involves the formation of a high-energy phosphoric-sulfuric acid anhydride bond driven by GTP hydrolysis by CysN coupled to ATP hydrolysis by CysD. This is Sulfate adenylyltransferase subunit 1 from Aeromonas salmonicida (strain A449).